A 181-amino-acid chain; its full sequence is MDDSEEDQRLPHHREPKEFIPLDKLSELGILSWRLNADDWENDEKLKKIREARGYSYMDICDVCPEKLPNYEAKIKNFFEEHLRTDEEIRYCLEGSGYFDVRDENDQWIRVAVKKGGMIVLPAGMYHRFTLDTDNYIKAMRLFVGEPVWTPYNRPHDHLPARKEYVEKIINRGGNQAVEAR.

It belongs to the acireductone dioxygenase (ARD) family.

It is found in the cytoplasm. The protein localises to the nucleus. Functionally, probable inactive acireductone dioxygenase. In Sorghum bicolor (Sorghum), this protein is Probable inactive acireductone dioxygenase 2.